The chain runs to 1575 residues: Ras GTPase-activating-like protein IQGAP2 (1575 aa).

Phosphoserine is present on serine 16. Positions 41–156 constitute a Calponin-homology (CH) domain; that stretch reads LCHLEEAKRW…YCIHALSLYL (116 aa). Threonine 356 is modified (phosphothreonine). Residues 594-627 enclose the WW domain; sequence ESSEGSWVTLNVQEKYNYYYNTDSKEGSWVPPEL. Phosphoserine occurs at positions 595 and 599. IQ domains follow at residues 690 to 719, 720 to 749, and 750 to 779; these read QTES…VFAG, NVDS…YFED, and HKNE…SENP. Threonine 782, threonine 881, threonine 1002, and threonine 1269 each carry phosphothreonine. The Ras-GAP domain occupies 933-1182; it reads YLLLKLFKTA…QEFRKYFQEA (250 aa). A phosphoserine mark is found at serine 1279 and serine 1461.

In terms of biological role, binds to activated CDC42 and RAC1 but does not seem to stimulate their GTPase activity. Associates with calmodulin. The protein is Ras GTPase-activating-like protein IQGAP2 (Iqgap2) of Mus musculus (Mouse).